The chain runs to 100 residues: Osteocalcin (100 aa).

Positions 1-23 are cleaved as a signal peptide; it reads MRTPMLLALLALATLCLAGRADA. Residues 24–51 constitute a propeptide that is removed on maturation; the sequence is KPGDAESGKGAAFVSKQEGSEVVKRLRR. The Gla domain maps to 52-98; that stretch reads YLDHWLGAPAPYPDPLEPKREVCELNPDCDELADHIGFQEAYRRFYG. Pro60 is subject to 4-hydroxyproline. The Ca(2+) site is built by Glu68, Glu72, Glu75, and Asp81. 3 positions are modified to 4-carboxyglutamate: Glu68, Glu72, and Glu75. Residues Cys74 and Cys80 are joined by a disulfide bond.

This sequence belongs to the osteocalcin/matrix Gla protein family. Post-translationally, gamma-carboxyglutamate residues are formed by vitamin K dependent carboxylation by GGCX. These residues are essential for the binding of calcium. Decarboxylation promotes the hormone activity.

Its subcellular location is the secreted. The carboxylated form is one of the main organic components of the bone matrix, which constitutes 1-2% of the total bone protein. It acts as a negative regulator of bone formation and is required to limit bone formation without impairing bone resorption or mineralization. The carboxylated form binds strongly to apatite and calcium. In terms of biological role, the uncarboxylated form acts as a hormone secreted by osteoblasts, which regulates different cellular processes, such as energy metabolism, male fertility and brain development. Regulates of energy metabolism by acting as a hormone favoring pancreatic beta-cell proliferation, insulin secretion and sensitivity and energy expenditure. Uncarboxylated osteocalcin hormone also promotes testosterone production in the testes: acts as a ligand for G protein-coupled receptor GPRC6A at the surface of Leydig cells, initiating a signaling response that promotes the expression of enzymes required for testosterone synthesis in a CREB-dependent manner. Also acts as a regulator of brain development: osteocalcin hormone crosses the blood-brain barrier and acts as a ligand for GPR158 on neurons, initiating a signaling response that prevents neuronal apoptosis in the hippocampus, favors the synthesis of all monoamine neurotransmitters and inhibits that of gamma-aminobutyric acid (GABA). Osteocalcin also crosses the placenta during pregnancy and maternal osteocalcin is required for fetal brain development. This Bos taurus (Bovine) protein is Osteocalcin (BGLAP).